The following is a 291-amino-acid chain: tRNA U34 carboxymethyltransferase (291 aa).

Carboxy-S-adenosyl-L-methionine is bound by residues lysine 61, tryptophan 75, lysine 80, glycine 100, 122–124 (DPS), 149–150 (VE), tyrosine 169, and arginine 284.

The protein belongs to the class I-like SAM-binding methyltransferase superfamily. CmoB family. Homotetramer.

It catalyses the reaction carboxy-S-adenosyl-L-methionine + 5-hydroxyuridine(34) in tRNA = 5-carboxymethoxyuridine(34) in tRNA + S-adenosyl-L-homocysteine + H(+). Functionally, catalyzes carboxymethyl transfer from carboxy-S-adenosyl-L-methionine (Cx-SAM) to 5-hydroxyuridine (ho5U) to form 5-carboxymethoxyuridine (cmo5U) at position 34 in tRNAs. The sequence is that of tRNA U34 carboxymethyltransferase from Campylobacter jejuni subsp. jejuni serotype O:2 (strain ATCC 700819 / NCTC 11168).